The sequence spans 130 residues: Lysozyme C (130 aa).

The 130-residue stretch at 1 to 130 (KIYERCELAR…LTPYIRGCGV (130 aa)) folds into the C-type lysozyme domain. 4 cysteine pairs are disulfide-bonded: C6-C128, C30-C116, C65-C81, and C77-C95. Active-site residues include E35 and D53.

The protein belongs to the glycosyl hydrolase 22 family. Monomer.

The protein localises to the secreted. It catalyses the reaction Hydrolysis of (1-&gt;4)-beta-linkages between N-acetylmuramic acid and N-acetyl-D-glucosamine residues in a peptidoglycan and between N-acetyl-D-glucosamine residues in chitodextrins.. Functionally, lysozymes have primarily a bacteriolytic function; those in tissues and body fluids are associated with the monocyte-macrophage system and enhance the activity of immunoagents. The polypeptide is Lysozyme C (LYZ) (Oryctolagus cuniculus (Rabbit)).